A 269-amino-acid chain; its full sequence is Hydroxyethylthiazole kinase (269 aa).

Substrate is bound at residue methionine 42. 2 residues coordinate ATP: arginine 118 and serine 164. Glycine 191 contacts substrate.

It belongs to the Thz kinase family. It depends on Mg(2+) as a cofactor.

The enzyme catalyses 5-(2-hydroxyethyl)-4-methylthiazole + ATP = 4-methyl-5-(2-phosphooxyethyl)-thiazole + ADP + H(+). It participates in cofactor biosynthesis; thiamine diphosphate biosynthesis; 4-methyl-5-(2-phosphoethyl)-thiazole from 5-(2-hydroxyethyl)-4-methylthiazole: step 1/1. Functionally, catalyzes the phosphorylation of the hydroxyl group of 4-methyl-5-beta-hydroxyethylthiazole (THZ). This Listeria welshimeri serovar 6b (strain ATCC 35897 / DSM 20650 / CCUG 15529 / CIP 8149 / NCTC 11857 / SLCC 5334 / V8) protein is Hydroxyethylthiazole kinase.